We begin with the raw amino-acid sequence, 779 residues long: Nucleolar complex protein 3 homolog (779 aa).

Disordered regions lie at residues 1-20 and 100-189; these read MGFA…TNKT and NAKR…SHLS. Positions 114–124 are enriched in acidic residues; that stretch reads DSDEDEDEDDV. Residues 136-160 are compositionally biased toward basic and acidic residues; sequence EEGHEELLPIKLKDGTLIRPTREKE. Acidic residues predominate over residues 161-178; sequence VEEQEEEEKSDIDEGEED. The stretch at 434–474 forms a coiled coil; it reads AKKYQIKKERASKTAKKYKKQLARLEADLLEVEAEESLTKK.

It belongs to the CBF/MAK21 family.

The protein localises to the nucleus. The protein resides in the nucleolus. This chain is Nucleolar complex protein 3 homolog, found in Caenorhabditis briggsae.